A 534-amino-acid polypeptide reads, in one-letter code: MKYIIVTGGVMSGLGKGITIASIGRNLKDKGYKVTAIKIDPYINIDAGTMSPYQHGEVFVLKDGGEVDLDLGNYERFLDTELTRDHNLTTGKIYLEVISKERRGDYLGKTVQIIPHVTNEIKSRIRKVAARSGADICLIEIGGTVGDIESMPFLEAVRQMHREEPSENIAFIHVTLAMEDLQGEQKTKPSQHSVKELRALGLSPEVIVVRSKSPLQESAKEKIALFCDVPQELVISAHDADDIYEVPLEIEEQGLTTQLMKHLQLESSVENGAWKKMVSRMHSTTNTVKLAIVGKYTNLEDSYLSILEAVKHGGIDNGCRVEVNMVEAEILEENPAEIEKLIQYDGILIPGGFGGRGTEGKMMAIKFARENDIPFLGICLGMQLAVIEFARNVAKLKGANSTEFDEDSPYPVIDLLPEQTGVAEMGGTMRLGDYEAILTEGSIAAKIYGTNYIVERHRHRYEVNPEFVDRLESYGIVFSGKNKNRMEIAEIPGKRFFFGSQFHPEFRSRPGRPSPPFNGLVAAMCKYRKEREGR.

The segment at 1–265 (MKYIIVTGGV…TTQLMKHLQL (265 aa)) is amidoligase domain. Ser12 serves as a coordination point for CTP. Ser12 contributes to the UTP binding site. 13 to 18 (GLGKGI) is a binding site for ATP. Residue Tyr53 coordinates L-glutamine. Asp70 is a binding site for ATP. Residues Asp70 and Glu140 each coordinate Mg(2+). CTP contacts are provided by residues 147–149 (DIE), 186–191 (KTKPSQ), and Lys222. UTP is bound by residues 186-191 (KTKPSQ) and Lys222. The Glutamine amidotransferase type-1 domain maps to 289-530 (KLAIVGKYTN…VAAMCKYRKE (242 aa)). Gly352 contributes to the L-glutamine binding site. Cys379 serves as the catalytic Nucleophile; for glutamine hydrolysis. Residues 380–383 (LGMQ), Glu403, and Arg460 contribute to the L-glutamine site. Residues His503 and Glu505 contribute to the active site.

This sequence belongs to the CTP synthase family. As to quaternary structure, homotetramer.

It catalyses the reaction UTP + L-glutamine + ATP + H2O = CTP + L-glutamate + ADP + phosphate + 2 H(+). The catalysed reaction is L-glutamine + H2O = L-glutamate + NH4(+). It carries out the reaction UTP + NH4(+) + ATP = CTP + ADP + phosphate + 2 H(+). Its pathway is pyrimidine metabolism; CTP biosynthesis via de novo pathway; CTP from UDP: step 2/2. Its activity is regulated as follows. Allosterically activated by GTP, when glutamine is the substrate; GTP has no effect on the reaction when ammonia is the substrate. The allosteric effector GTP functions by stabilizing the protein conformation that binds the tetrahedral intermediate(s) formed during glutamine hydrolysis. Inhibited by the product CTP, via allosteric rather than competitive inhibition. Functionally, catalyzes the ATP-dependent amination of UTP to CTP with either L-glutamine or ammonia as the source of nitrogen. Regulates intracellular CTP levels through interactions with the four ribonucleotide triphosphates. The protein is CTP synthase of Methanosarcina barkeri (strain Fusaro / DSM 804).